The sequence spans 219 residues: MKSTCYMIGILLLILQNTYQSPVPEADGSSRSVKAARNEAVDDSEQLKEVKRHSQGTFTSDYSKYLDSRRAQDFVQWLMNTKRSGGLSRRNADYERHAEGTFTSDVTQHLDEKAAKEFIDWLINGGPTKEIISRRNAEIERHAEGTYTNDVTEYLEEKATKAFIEWLIKGKPKKIRYSRHAEGTFTNDMTNYLEEKAAKEFVGWLINGRPKRKDLLEEH.

An N-terminal signal peptide occupies residues 1 to 20 (MKSTCYMIGILLLILQNTYQ). 5 consecutive propeptides follow at residues 21-50 (SPVP…LKEV), 84-95 (SGGLSRRNADYE), 136-140 (NAEIE), 175-178 (IRYS), and 213-219 (KDLLEEH). The segment at 23-43 (VPEADGSSRSVKAARNEAVDD) is disordered.

Belongs to the glucagon family.

The protein resides in the secreted. Its function is as follows. Promotes hydrolysis of glycogen and lipids, and raises the blood sugar level. The chain is Glucagon-2 (gcg2) from Xenopus laevis (African clawed frog).